The sequence spans 226 residues: Large ribosomal subunit protein uL1 (226 aa).

This sequence belongs to the universal ribosomal protein uL1 family. Part of the 50S ribosomal subunit.

Binds directly to 23S rRNA. The L1 stalk is quite mobile in the ribosome, and is involved in E site tRNA release. In terms of biological role, protein L1 is also a translational repressor protein, it controls the translation of the L11 operon by binding to its mRNA. This is Large ribosomal subunit protein uL1 from Mycoplasma pneumoniae (strain ATCC 29342 / M129 / Subtype 1) (Mycoplasmoides pneumoniae).